Here is a 263-residue protein sequence, read N- to C-terminus: Endonuclease 8 (263 aa).

P2 (schiff-base intermediate with DNA) is an active-site residue. Residue E3 is the Proton donor of the active site. K53 functions as the Proton donor; for beta-elimination activity in the catalytic mechanism. Positions 70, 125, and 169 each coordinate DNA. The segment at 229 to 263 adopts an FPG-type zinc-finger fold; that stretch reads KVFHRDGEACERCGGIIEKTTLSSRPFYWCPHCQK. R253 serves as the catalytic Proton donor; for delta-elimination activity.

Belongs to the FPG family. It depends on Zn(2+) as a cofactor.

It carries out the reaction 2'-deoxyribonucleotide-(2'-deoxyribose 5'-phosphate)-2'-deoxyribonucleotide-DNA = a 3'-end 2'-deoxyribonucleotide-(2,3-dehydro-2,3-deoxyribose 5'-phosphate)-DNA + a 5'-end 5'-phospho-2'-deoxyribonucleoside-DNA + H(+). Functionally, involved in base excision repair of DNA damaged by oxidation or by mutagenic agents. Acts as a DNA glycosylase that recognizes and removes damaged bases. Has a preference for oxidized pyrimidines, such as thymine glycol, 5,6-dihydrouracil and 5,6-dihydrothymine. Has AP (apurinic/apyrimidinic) lyase activity and introduces nicks in the DNA strand. Cleaves the DNA backbone by beta-delta elimination to generate a single-strand break at the site of the removed base with both 3'- and 5'-phosphates. This chain is Endonuclease 8, found in Salmonella dublin (strain CT_02021853).